We begin with the raw amino-acid sequence, 202 residues long: Small ribosomal subunit protein uS4c (202 aa).

Positions 18 to 45 (LPGLTRKMAKRKSPPGQHGAASKKPSQY) are disordered. The S4 RNA-binding domain maps to 90–152 (MRLDTTIFRL…SRSRKLIEGY (63 aa)).

The protein belongs to the universal ribosomal protein uS4 family. Part of the 30S ribosomal subunit. Contacts protein S5. The interaction surface between S4 and S5 is involved in control of translational fidelity.

Its subcellular location is the plastid. It localises to the chloroplast. Functionally, one of the primary rRNA binding proteins, it binds directly to 16S rRNA where it nucleates assembly of the body of the 30S subunit. With S5 and S12 plays an important role in translational accuracy. The chain is Small ribosomal subunit protein uS4c (rps4) from Nephroselmis olivacea (Green alga).